Consider the following 307-residue polypeptide: Ribonuclease Z (307 aa).

Positions 61, 63, 65, 66, 138, 208, and 264 each coordinate Zn(2+). D65 functions as the Proton acceptor in the catalytic mechanism.

This sequence belongs to the RNase Z family. Homodimer. Zn(2+) is required as a cofactor.

It carries out the reaction Endonucleolytic cleavage of RNA, removing extra 3' nucleotides from tRNA precursor, generating 3' termini of tRNAs. A 3'-hydroxy group is left at the tRNA terminus and a 5'-phosphoryl group is left at the trailer molecule.. In terms of biological role, zinc phosphodiesterase, which displays some tRNA 3'-processing endonuclease activity. Probably involved in tRNA maturation, by removing a 3'-trailer from precursor tRNA. In Pyrococcus horikoshii (strain ATCC 700860 / DSM 12428 / JCM 9974 / NBRC 100139 / OT-3), this protein is Ribonuclease Z.